Reading from the N-terminus, the 474-residue chain is Fumarate hydratase class II (474 aa).

Residues 104 to 106 (SGT), 128 to 131 (HPND), 138 to 140 (SSN), and Thr186 contribute to the substrate site. His187 serves as the catalytic Proton donor/acceptor. Ser318 is an active-site residue. Residues Ser319 and 324 to 326 (KVN) each bind substrate.

It belongs to the class-II fumarase/aspartase family. Fumarase subfamily. In terms of assembly, homotetramer.

The protein resides in the cytoplasm. It carries out the reaction (S)-malate = fumarate + H2O. Its pathway is carbohydrate metabolism; tricarboxylic acid cycle; (S)-malate from fumarate: step 1/1. Involved in the TCA cycle. Catalyzes the stereospecific interconversion of fumarate to L-malate. This Mycobacterium bovis (strain ATCC BAA-935 / AF2122/97) protein is Fumarate hydratase class II.